A 144-amino-acid polypeptide reads, in one-letter code: Bacilliredoxin SH1478 (144 aa).

The protein belongs to the bacilliredoxin family.

This is Bacilliredoxin SH1478 from Staphylococcus haemolyticus (strain JCSC1435).